A 543-amino-acid polypeptide reads, in one-letter code: MASAAEAVEELTRLYRELPPRPAVEEVEAAEAVLASADAEEAARLDEVAREEASASASSSAAAPGRADGELLAVLREARRNAVRLRALQQRKEAAYVVELERRFKVFDDLIQRASRVVSSSSDAAEAGGGTTGDGYVGVGADSVDLEMELRKKEAAVAAAAAVAEMERGSKGLAALGLESKPISSLRRDVSAGTDMEKLSLIQVASLIESSAKKGITELSLRGKLVDQIEWLPVSLGKLQDVTELDLSENRIMALPSTIGSLRYLTKLDLHSNQLINLPDAFGELSNLIDLDLHANQLKSLPSSFGNLTSLANLDLSSNMLKALPDCLGKLANLRRLIVETNELEELPYTIGSCTSLVELRLDFNQLKALPEAIGKLEKLEILTLHYNRIKGLPTTVGSLSRLRELDVSFNEVEVIPENICFATSLVKLNLSRNFADLRALPKSIGNLEMLEELDISSNQIRVLPDSFRCLSRLRVFHADETPLEFPPREVVKLGAQAVVKYMNDLNAARGTNQKKTDRGSFWTWLFSLFGCCKKNQEVGLPV.

10 LRR repeats span residues 239 to 262, 264 to 284, 285 to 307, 309 to 331, 332 to 354, 356 to 377, 378 to 400, 402 to 424, 426 to 448, and 449 to 470; these read LQDVTELDLSENRIMALPSTIGSL, YLTKLDLHSNQLINLPDAFGE, LSNLIDLDLHANQLKSLPSSFGN, TSLANLDLSSNMLKALPDCLGKL, ANLRRLIVETNELEELPYTIGSC, SLVELRLDFNQLKALPEAIGKL, EKLEILTLHYNRIKGLPTTVGSL, RLRELDVSFNEVEVIPENICFAT, LVKLNLSRNFADLRALPKSIGNL, and EMLEELDISSNQIRVLPDSFRC. An LRR 11; degenerate repeat occupies 472–494; it reads SRLRVFHADETPLEFPPREVVKL. The GVYW; degenerate motif lies at 495–502; sequence GAQAVVKY.

It belongs to the SHOC2 family. In terms of tissue distribution, widely expressed.

In terms of biological role, leucine-rich repeat protein that likely mediates protein interactions, possibly in the context of signal transduction. The protein is Plant intracellular Ras-group-related LRR protein 5 (IRL5) of Oryza sativa subsp. japonica (Rice).